Reading from the N-terminus, the 436-residue chain is 3-ketoacyl-CoA thiolase (436 aa).

The active-site Acyl-thioester intermediate is the cysteine 99. Residues histidine 392 and cysteine 422 each act as proton acceptor in the active site.

Belongs to the thiolase-like superfamily. Thiolase family. In terms of assembly, heterotetramer of two alpha chains (FadJ) and two beta chains (FadI).

The protein localises to the cytoplasm. The enzyme catalyses an acyl-CoA + acetyl-CoA = a 3-oxoacyl-CoA + CoA. The protein operates within lipid metabolism; fatty acid beta-oxidation. Its function is as follows. Catalyzes the final step of fatty acid oxidation in which acetyl-CoA is released and the CoA ester of a fatty acid two carbons shorter is formed. This chain is 3-ketoacyl-CoA thiolase, found in Escherichia coli (strain 55989 / EAEC).